The sequence spans 104 residues: Large ribosomal subunit protein uL24 (104 aa).

The protein belongs to the universal ribosomal protein uL24 family. As to quaternary structure, part of the 50S ribosomal subunit.

Its function is as follows. One of two assembly initiator proteins, it binds directly to the 5'-end of the 23S rRNA, where it nucleates assembly of the 50S subunit. Functionally, one of the proteins that surrounds the polypeptide exit tunnel on the outside of the subunit. This is Large ribosomal subunit protein uL24 from Proteus mirabilis (strain HI4320).